The sequence spans 229 residues: Peptidase E (229 aa).

Active-site charge relay system residues include serine 120, aspartate 135, and histidine 157.

It belongs to the peptidase S51 family.

The protein resides in the cytoplasm. The enzyme catalyses Dipeptidase E catalyzes the hydrolysis of dipeptides Asp-|-Xaa. It does not act on peptides with N-terminal Glu, Asn or Gln, nor does it cleave isoaspartyl peptides.. In terms of biological role, hydrolyzes dipeptides containing N-terminal aspartate residues. May play a role in allowing the cell to use peptide aspartate to spare carbon otherwise required for the synthesis of the aspartate family of amino acids. The sequence is that of Peptidase E from Salmonella newport (strain SL254).